A 300-amino-acid polypeptide reads, in one-letter code: Probable alpha-L-glutamate ligase (300 aa).

Residues 104-287 (LQLLARQGID…IAGKMISWIE (184 aa)) enclose the ATP-grasp domain. Residues Lys141, 178–179 (EY), Asp187, and 211–213 (RSN) contribute to the ATP site. Residues Asp248, Glu260, and Asn262 each coordinate Mg(2+). Mn(2+)-binding residues include Asp248, Glu260, and Asn262.

Belongs to the RimK family. Mg(2+) is required as a cofactor. The cofactor is Mn(2+).

This is Probable alpha-L-glutamate ligase from Enterobacter sp. (strain 638).